The sequence spans 155 residues: Interleukin-2 (155 aa).

The signal sequence occupies residues 1–20; sequence MYKIQLLSCIALTLALVANG. Thr23 is a glycosylation site (O-linked (GalNAc...) threonine). Cys79 and Cys127 are disulfide-bonded.

The protein belongs to the IL-2 family.

It is found in the secreted. Cytokine produced by activated CD4-positive helper T-cells and to a lesser extend activated CD8-positive T-cells and natural killer (NK) cells that plays pivotal roles in the immune response and tolerance. Binds to a receptor complex composed of either the high-affinity trimeric IL-2R (IL2RA/CD25, IL2RB/CD122 and IL2RG/CD132) or the low-affinity dimeric IL-2R (IL2RB and IL2RG). Interaction with the receptor leads to oligomerization and conformation changes in the IL-2R subunits resulting in downstream signaling starting with phosphorylation of JAK1 and JAK3. In turn, JAK1 and JAK3 phosphorylate the receptor to form a docking site leading to the phosphorylation of several substrates including STAT5. This process leads to activation of several pathways including STAT, phosphoinositide-3-kinase/PI3K and mitogen-activated protein kinase/MAPK pathways. Functions as a T-cell growth factor and can increase NK-cell cytolytic activity as well. Promotes strong proliferation of activated B-cells and subsequently immunoglobulin production. Plays a pivotal role in regulating the adaptive immune system by controlling the survival and proliferation of regulatory T-cells, which are required for the maintenance of immune tolerance. Moreover, participates in the differentiation and homeostasis of effector T-cell subsets, including Th1, Th2, Th17 as well as memory CD8-positive T-cells. The chain is Interleukin-2 (IL2) from Ovis aries (Sheep).